The primary structure comprises 120 residues: Putative membrane protein insertion efficiency factor (120 aa).

The segment at 93–120 is disordered; it reads GRSCQTDVDGANDDWNPASKRGERESFV.

It belongs to the UPF0161 family.

The protein localises to the cell membrane. In terms of biological role, could be involved in insertion of integral membrane proteins into the membrane. The sequence is that of Putative membrane protein insertion efficiency factor from Mycobacterium bovis (strain ATCC BAA-935 / AF2122/97).